A 308-amino-acid polypeptide reads, in one-letter code: Protoheme IX farnesyltransferase (308 aa).

8 consecutive transmembrane segments (helical) span residues 31-51 (VIELLLVTAIPAMLLAQRGTV), 53-73 (PLLIVNTLIGGMLAAGGANAL), 102-122 (NALVFGLVLTAGSFLWLWWTT), 124-144 (LLSGLLALATIAFYVFIYTLL), 149-169 (TSQNVVWGGAAGCMPVMIGWS), 170-190 (AVTGTIQWPALVMFAIIFFWT), 240-260 (LALATGWLYAAVALVAGVWFL), and 288-308 (YLAVVFCALAIDSAIGLPHLF).

It belongs to the UbiA prenyltransferase family. Protoheme IX farnesyltransferase subfamily.

It localises to the cell membrane. The enzyme catalyses heme b + (2E,6E)-farnesyl diphosphate + H2O = Fe(II)-heme o + diphosphate. The protein operates within porphyrin-containing compound metabolism; heme O biosynthesis; heme O from protoheme: step 1/1. In terms of biological role, converts heme B (protoheme IX) to heme O by substitution of the vinyl group on carbon 2 of heme B porphyrin ring with a hydroxyethyl farnesyl side group. The polypeptide is Protoheme IX farnesyltransferase (Mycolicibacterium paratuberculosis (strain ATCC BAA-968 / K-10) (Mycobacterium paratuberculosis)).